The primary structure comprises 101 residues: Large ribosomal subunit protein uL24 (101 aa).

This sequence belongs to the universal ribosomal protein uL24 family. Part of the 50S ribosomal subunit.

One of two assembly initiator proteins, it binds directly to the 5'-end of the 23S rRNA, where it nucleates assembly of the 50S subunit. Its function is as follows. One of the proteins that surrounds the polypeptide exit tunnel on the outside of the subunit. This is Large ribosomal subunit protein uL24 from Streptococcus pyogenes serotype M1.